A 353-amino-acid chain; its full sequence is Holliday junction branch migration complex subunit RuvB (353 aa).

A large ATPase domain (RuvB-L) region spans residues 4–190 (TDKLQAPRVI…FGIVARLEFY (187 aa)). Residues leucine 29, arginine 30, glycine 71, lysine 74, threonine 75, threonine 76, 137–139 (EDF), arginine 180, tyrosine 190, and arginine 227 each bind ATP. Threonine 75 is a binding site for Mg(2+). The segment at 191-261 (TPHELAYIVG…VADAALLMLD (71 aa)) is small ATPAse domain (RuvB-S). Positions 264–353 (HLGLDLMDRK…DESAELFSAP (90 aa)) are head domain (RuvB-H). Arginine 319 and arginine 324 together coordinate DNA.

The protein belongs to the RuvB family. As to quaternary structure, homohexamer. Forms an RuvA(8)-RuvB(12)-Holliday junction (HJ) complex. HJ DNA is sandwiched between 2 RuvA tetramers; dsDNA enters through RuvA and exits via RuvB. An RuvB hexamer assembles on each DNA strand where it exits the tetramer. Each RuvB hexamer is contacted by two RuvA subunits (via domain III) on 2 adjacent RuvB subunits; this complex drives branch migration. In the full resolvosome a probable DNA-RuvA(4)-RuvB(12)-RuvC(2) complex forms which resolves the HJ.

The protein localises to the cytoplasm. The catalysed reaction is ATP + H2O = ADP + phosphate + H(+). The RuvA-RuvB-RuvC complex processes Holliday junction (HJ) DNA during genetic recombination and DNA repair, while the RuvA-RuvB complex plays an important role in the rescue of blocked DNA replication forks via replication fork reversal (RFR). RuvA specifically binds to HJ cruciform DNA, conferring on it an open structure. The RuvB hexamer acts as an ATP-dependent pump, pulling dsDNA into and through the RuvAB complex. RuvB forms 2 homohexamers on either side of HJ DNA bound by 1 or 2 RuvA tetramers; 4 subunits per hexamer contact DNA at a time. Coordinated motions by a converter formed by DNA-disengaged RuvB subunits stimulates ATP hydrolysis and nucleotide exchange. Immobilization of the converter enables RuvB to convert the ATP-contained energy into a lever motion, pulling 2 nucleotides of DNA out of the RuvA tetramer per ATP hydrolyzed, thus driving DNA branch migration. The RuvB motors rotate together with the DNA substrate, which together with the progressing nucleotide cycle form the mechanistic basis for DNA recombination by continuous HJ branch migration. Branch migration allows RuvC to scan DNA until it finds its consensus sequence, where it cleaves and resolves cruciform DNA. In Aromatoleum aromaticum (strain DSM 19018 / LMG 30748 / EbN1) (Azoarcus sp. (strain EbN1)), this protein is Holliday junction branch migration complex subunit RuvB.